A 266-amino-acid chain; its full sequence is NADH dehydrogenase [ubiquinone] iron-sulfur protein 3, mitochondrial (266 aa).

The N-terminal 38 residues, 1-38 (MAAAVAAAARGCWQRLVGSAAPARVAGRPSVLLLPVRR), are a transit peptide targeting the mitochondrion.

This sequence belongs to the complex I 30 kDa subunit family. Core subunit of respiratory chain NADH dehydrogenase (Complex I) which is composed of 45 different subunits. Interacts with NDUFAF3. Interacts with RAB5IF. Found in subcomplexes containing subunits NDUFS2, MT-ND1 and NDUFA13.

The protein resides in the mitochondrion inner membrane. The enzyme catalyses a ubiquinone + NADH + 5 H(+)(in) = a ubiquinol + NAD(+) + 4 H(+)(out). In terms of biological role, core subunit of the mitochondrial membrane respiratory chain NADH dehydrogenase (Complex I) which catalyzes electron transfer from NADH through the respiratory chain, using ubiquinone as an electron acceptor. Essential for the catalytic activity and assembly of complex I. This is NADH dehydrogenase [ubiquinone] iron-sulfur protein 3, mitochondrial (NDUFS3) from Bos taurus (Bovine).